The primary structure comprises 176 residues: Large ribosomal subunit protein uL10 (176 aa).

It belongs to the universal ribosomal protein uL10 family. Part of the ribosomal stalk of the 50S ribosomal subunit. The N-terminus interacts with L11 and the large rRNA to form the base of the stalk. The C-terminus forms an elongated spine to which L12 dimers bind in a sequential fashion forming a multimeric L10(L12)X complex.

Functionally, forms part of the ribosomal stalk, playing a central role in the interaction of the ribosome with GTP-bound translation factors. The chain is Large ribosomal subunit protein uL10 (rplJ) from Streptomyces antibioticus.